We begin with the raw amino-acid sequence, 605 residues long: Dolichyl-diphosphooligosaccharide--protein glycosyltransferase subunit 1 (605 aa).

An N-terminal signal peptide occupies residues 1–22 (MEAPIVLLLLLWLALAPTPGSA). The Lumenal portion of the chain corresponds to 23–437 (SSEAPPLVNE…FNKVLMLQEP (415 aa)). Position 185 is an N6-acetyllysine (Lys185). Asn297 carries N-linked (GlcNAc...) asparagine glycosylation. Residues 438 to 455 (LLVVAAFYILFFTVIIYV) traverse the membrane as a helical segment. The Cytoplasmic portion of the chain corresponds to 456–605 (RLDFSITKDP…TKIDHILDAL (150 aa)). An N6-acetyllysine; alternate modification is found at Lys536. Lys536 is covalently cross-linked (Glycyl lysine isopeptide (Lys-Gly) (interchain with G-Cter in SUMO2); alternate).

Belongs to the OST1 family. As to quaternary structure, component of the oligosaccharyltransferase (OST) complex. OST exists in two different complex forms which contain common core subunits RPN1, RPN2, OST48, OST4, DAD1 and TMEM258, either STT3A or STT3B as catalytic subunits, and form-specific accessory subunits. STT3A complex assembly occurs through the formation of 3 subcomplexes. Subcomplex 1 contains RPN1 and TMEM258, subcomplex 2 contains the STT3A-specific subunits STT3A, DC2/OSTC, and KCP2 as well as the core subunit OST4, and subcomplex 3 contains RPN2, DAD1, and OST48. The STT3A complex can form stable complexes with the Sec61 complex or with both the Sec61 and TRAP complexes. Interacts with TMEM35A/NACHO. Post-translationally, ubiquitinated by the ECS(ASB11) complex. Ufmylated by UFL1 in response to endoplasmic reticulum stress, promoting reticulophagy of endoplasmic reticulum sheets. As to expression, expressed in all tissues tested.

Its subcellular location is the endoplasmic reticulum membrane. It participates in protein modification; protein glycosylation. In terms of biological role, subunit of the oligosaccharyl transferase (OST) complex that catalyzes the initial transfer of a defined glycan (Glc(3)Man(9)GlcNAc(2) in eukaryotes) from the lipid carrier dolichol-pyrophosphate to an asparagine residue within an Asn-X-Ser/Thr consensus motif in nascent polypeptide chains, the first step in protein N-glycosylation. N-glycosylation occurs cotranslationally and the complex associates with the Sec61 complex at the channel-forming translocon complex that mediates protein translocation across the endoplasmic reticulum (ER). All subunits are required for a maximal enzyme activity. The polypeptide is Dolichyl-diphosphooligosaccharide--protein glycosyltransferase subunit 1 (Rattus norvegicus (Rat)).